The primary structure comprises 1545 residues: Immunoglobulin A1 protease autotransporter (1545 aa).

The signal sequence occupies residues 1–25; the sequence is MLNKKFKLNFIALTVAYALTPYTEA. Residues 26-336 enclose the Peptidase S6 domain; the sequence is ALVRDDVDYQ…NIYKPEFAEK (311 aa). Residue Ser292 is part of the active site. A compositionally biased stretch (polar residues) spans 995 to 1019; sequence TVDTTNITTPNNIQADVPSVPSNNE. The segment at 995–1246 is disordered; it reads TVDTTNITTP…NVEPATTSSN (252 aa). Residues 1036–1046 are compositionally biased toward low complexity; that stretch reads TPSETTETVAE. Basic and acidic residues predominate over residues 1048-1060; it reads SKQESKTVEKNEQ. A compositionally biased stretch (polar residues) spans 1080–1094; it reads VKANTQTNEVAQSGS. The segment covering 1095–1125 has biased composition (basic and acidic residues); sequence ETKETQTTETKETATVEKEEKAKVETEKTQE. 2 stretches are compositionally biased toward polar residues: residues 1129-1145 and 1161-1222; these read VTSQ…TVQP and EPQS…SSNK. One can recognise an Autotransporter domain in the interval 1293–1545; it reads NNEGQYNVWV…TAELKLSFSF (253 aa).

It localises to the periplasm. The protein resides in the secreted. Its subcellular location is the cell surface. The protein localises to the cell outer membrane. It carries out the reaction Cleavage of immunoglobulin A molecules at certain Pro-|-Xaa bonds in the hinge region. No small molecule substrates are known.. Virulence factor; cleaves host immunoglobulin A producing intact Fc and Fab fragments. The polypeptide is Immunoglobulin A1 protease autotransporter (iga) (Haemophilus influenzae).